The primary structure comprises 41 residues: Large ribosomal subunit protein bL36 (41 aa).

The protein belongs to the bacterial ribosomal protein bL36 family.

This Rhodopseudomonas palustris (strain BisA53) protein is Large ribosomal subunit protein bL36.